A 77-amino-acid chain; its full sequence is Metallocarboxypeptidase inhibitor (77 aa).

An N-terminal signal peptide occupies residues 1–32; it reads MAQKFTILFTILLVVIAAQDVMAQDATLTKLF. Gln-33 carries the pyrrolidone carboxylic acid modification. 3 disulfide bridges follow: Cys-39–Cys-55, Cys-43–Cys-58, and Cys-49–Cys-65. A propeptide spans 70–77 (hydrophobic peptide); it reads GRAMAIGV.

This sequence to potato MCPI. As to expression, ovaries.

In terms of biological role, may play a defensive role against insect attacks. The protein is Metallocarboxypeptidase inhibitor of Solanum lycopersicum (Tomato).